The following is a 977-amino-acid chain: MNKNLLVFGFLIFVKIGETSKKFPLRAFVASTDIDNDTAHAIIEMLRLAEMTFNALSDVDFDVLLGTRDLPPMEMATMMWNLNRIICDEMKLGYMLMLAGTNFKNYGIYEDIANHMKMPLIDWEPSKSENIGKTTENNPMIFSVAPSAEQLLIDYIQYKGWRDVVYIHDGKNADRTLRTMFSYLHEKSPKYQLFVDNYVAPSDEEMFKEFLNEFHRRISTQHTLKSNDSSEEIDEPIPVNVIVDLEGSYRTRAFLRALEESVLVKKEYHYVFSNFDVDETDLSGFHFSLINITIFRIFDKNNKKFLKTRAEFHDVYRGGFSNTDSIPTAAAFAHDAILVAGKALQIAMNEHGKGIFDKSFVRHQLFNRGRKGLYCRPHEDQTESRQFETFEHGKKIAEAIKKVVLTDKDGTLTGRIQFDKVTGKRTNFSAEIVEIKPGVNSLNSIWERFQWAEGEGFLLGGERYVQEKKKDSSQTRKGILPSKPWQLRFNVVTVLVKPFVMLKRRNPGEPELKGNDRFEGYCIDLLNLLAKNITGFEYDVFISDGNKYGSRQADGSWDGMIGYLLNETADVAVAPLTITQERERAVDFSKPFMTTGISIMIKKPEKQEFNIFSFMEPLGMTIWIFTLSSYFGVSLTIFLVSWFSPYEKRIEFKRGEFTVTNEFTLYNSLWFTLAAFMQQGTDILPRAVSGRIASSCWWFFTLIIVSSYTANLAAFLTLERMTPPIESVEDLANQNKILYGVNEGGSTAAFFEDSIVPLYKKMWNFMVSTTQKQIELEKQSITNSTSNRIFVSSYADGIEKVRTSKGKYAFLLEETTNNYESGRRPCDTMKVGQNLNTLGYGIATKIGNPLRVSLNLAILYLSEKGELKKLENKWWYDRGQCDTGTSDGGTSSSLNLSKVAGIFYILLAGMVLSMCTALVEFLFRKNKENREKERNRMRSSRPLKPGILASCERAKQKQLQNRRTKSEEVSTPRSTLF.

An N-terminal signal peptide occupies residues 1 to 19; that stretch reads MNKNLLVFGFLIFVKIGET. Residues 20-621 lie on the Extracellular side of the membrane; sequence SKKFPLRAFV…FSFMEPLGMT (602 aa). N-linked (GlcNAc...) asparagine glycans are attached at residues asparagine 36, asparagine 227, asparagine 291, asparagine 427, asparagine 532, and asparagine 566. A helical membrane pass occupies residues 622–642; it reads IWIFTLSSYFGVSLTIFLVSW. The Cytoplasmic portion of the chain corresponds to 643-695; the sequence is FSPYEKRIEFKRGEFTVTNEFTLYNSLWFTLAAFMQQGTDILPRAVSGRIASS. The chain crosses the membrane as a helical span at residues 696-716; it reads CWWFFTLIIVSSYTANLAAFL. The Extracellular segment spans residues 717–898; the sequence is TLERMTPPIE…GTSSSLNLSK (182 aa). Residues asparagine 783 and asparagine 895 are each glycosylated (N-linked (GlcNAc...) asparagine). A helical transmembrane segment spans residues 899–919; the sequence is VAGIFYILLAGMVLSMCTALV. Over 920-977 the chain is Cytoplasmic; that stretch reads EFLFRKNKENREKERNRMRSSRPLKPGILASCERAKQKQLQNRRTKSEEVSTPRSTLF. Residues 954–977 form a disordered region; the sequence is AKQKQLQNRRTKSEEVSTPRSTLF.

The protein belongs to the glutamate-gated ion channel (TC 1.A.10.1) family. In terms of tissue distribution, command interneurons of the locomotory control circuit (AIA, AIB, AVA, AVD, AVE, PVC, RIA, RIG and RIR) and motor neurons (AVG, M1, RMDD and RMDV).

The protein localises to the membrane. It localises to the postsynaptic cell membrane. L-glutamate acts as an excitatory neurotransmitter at many synapses in the central nervous system. The postsynaptic actions of glutamate are mediated by a variety of receptors that are named according to their selective agonists. Required for response to mechanical and osmotic stimuli. The protein is Glutamate receptor 2 (glr-2) of Caenorhabditis elegans.